The following is a 547-amino-acid chain: CTP synthase (547 aa).

Residues 1–273 (MNNKKLKSKF…DHFILNHFQL (273 aa)) form an amidoligase domain region. Serine 19 provides a ligand contact to CTP. UTP is bound at residue serine 19. 20–25 (SLGKGI) is an ATP binding site. L-glutamine is bound at residue tyrosine 60. Residue aspartate 77 participates in ATP binding. Mg(2+) contacts are provided by aspartate 77 and glutamate 147. Residues 154 to 156 (DIE), 194 to 199 (KTKPTQ), and lysine 230 each bind CTP. UTP-binding positions include 194 to 199 (KTKPTQ) and lysine 230. One can recognise a Glutamine amidotransferase type-1 domain in the interval 306 to 539 (YVILHDAYLS…VEAALLKNGK (234 aa)). L-glutamine is bound at residue glycine 361. Cysteine 388 (nucleophile; for glutamine hydrolysis) is an active-site residue. L-glutamine is bound by residues 389-392 (FGMQ), glutamate 412, and arginine 466. Residues histidine 512 and glutamate 514 contribute to the active site.

The protein belongs to the CTP synthase family. As to quaternary structure, homotetramer.

The catalysed reaction is UTP + L-glutamine + ATP + H2O = CTP + L-glutamate + ADP + phosphate + 2 H(+). It catalyses the reaction L-glutamine + H2O = L-glutamate + NH4(+). The enzyme catalyses UTP + NH4(+) + ATP = CTP + ADP + phosphate + 2 H(+). It participates in pyrimidine metabolism; CTP biosynthesis via de novo pathway; CTP from UDP: step 2/2. Its activity is regulated as follows. Allosterically activated by GTP, when glutamine is the substrate; GTP has no effect on the reaction when ammonia is the substrate. The allosteric effector GTP functions by stabilizing the protein conformation that binds the tetrahedral intermediate(s) formed during glutamine hydrolysis. Inhibited by the product CTP, via allosteric rather than competitive inhibition. In terms of biological role, catalyzes the ATP-dependent amination of UTP to CTP with either L-glutamine or ammonia as the source of nitrogen. Regulates intracellular CTP levels through interactions with the four ribonucleotide triphosphates. This Phytoplasma australiense protein is CTP synthase.